A 624-amino-acid chain; its full sequence is Histone-lysine N-methyltransferase, H3 lysine-9 specific SUVH4 (624 aa).

Disordered regions lie at residues 1–25 (MAGK…VQKV) and 54–86 (DDTE…KGKQ). A YDG domain is found at 149 to 302 (GDLPGIDVGH…FTVYKYRLKR (154 aa)). The Pre-SET domain maps to 381-443 (TGCNCRGSCT…KCVNRTSQKR (63 aa)). Residues Cys-383, Cys-385, Cys-389, Cys-395, Cys-397, Cys-425, Cys-429, Cys-431, and Cys-435 each coordinate Zn(2+). The SET domain occupies 446-594 (FNLEVFRSAK…PMQELTYDYG (149 aa)). S-adenosyl-L-methionine contacts are provided by residues 456–458 (KGW), Tyr-493, Arg-548, and 551–552 (NH). Cys-554, Cys-612, Cys-614, and Cys-619 together coordinate Zn(2+). One can recognise a Post-SET domain in the interval 608-624 (KQLACYCGALNCRKRLY).

The protein belongs to the class V-like SAM-binding methyltransferase superfamily. Histone-lysine methyltransferase family. Suvar3-9 subfamily. Interacts with H3 histone. Expressed in leaves stems and flowers.

It localises to the nucleus. Its subcellular location is the chromosome. The protein localises to the centromere. It carries out the reaction N(6)-methyl-L-lysyl(9)-[histone H3] + S-adenosyl-L-methionine = N(6),N(6)-dimethyl-L-lysyl(9)-[histone H3] + S-adenosyl-L-homocysteine + H(+). The enzyme catalyses L-lysyl(9)-[histone H3] + S-adenosyl-L-methionine = N(6)-methyl-L-lysyl(9)-[histone H3] + S-adenosyl-L-homocysteine + H(+). Functionally, histone methyltransferase. Methylates 'Lys-9' of histone H3. H3 'Lys-9' methylation represents a specific tag for epigenetic transcriptional repression. The silencing mechanism via DNA CpNpG methylation requires the targeting of chromomethylase CMT3 to methylated histones, probably through an interaction with an HP1-like adapter. By its function, KYP is directly required for the maintenance of the DNA CpNpG and asymmetric methylation. Involved in the silencing of transposable elements. The protein is Histone-lysine N-methyltransferase, H3 lysine-9 specific SUVH4 (SUVH4) of Arabidopsis thaliana (Mouse-ear cress).